Here is a 9702-residue protein sequence, read N- to C-terminus: Nonribosomal peptide synthetase ungA (9702 aa).

The adenylation 1 stretch occupies residues 248–647 (EQAQLRPHAP…ARKDTQVKIR (400 aa)). The Carrier 1 domain maps to 775–852 (APQTEMEYRL…MARAAQEKQT (78 aa)). O-(pantetheine 4'-phosphoryl)serine is present on serine 812. Residues 891–1288 (DILPCTPLQE…EAVLRHVCSQ (398 aa)) are condensation 1. Positions 1330-1730 (QRTQQQPDAP…GRKDTQVKIR (401 aa)) are adenylation 2. Positions 1857-1933 (LPQSPMEKSL…RLARREIQTD (77 aa)) constitute a Carrier 2 domain. Serine 1894 is subject to O-(pantetheine 4'-phosphoryl)serine. The epimerization 1 stretch occupies residues 1946-2374 (PFALSPIQQF…ERALEGTAVQ (429 aa)). Positions 2414 to 2842 (EDIYPCSPLQ…LDTAILSPQD (429 aa)) are condensation 2. An adenylation 3 region spans residues 2868-3267 (QVERQPDALA…GRKDTQVKIR (400 aa)). The Carrier 3 domain occupies 3397–3473 (APTTEMERHL…EMSQVAKLGS (77 aa)). O-(pantetheine 4'-phosphoryl)serine is present on serine 3434. The interval 3512–3920 (EDVFPCTPLQ…LLCDASHHQS (409 aa)) is condensation 3. The adenylation 4 stretch occupies residues 3957 to 4361 (KQTQRRSAAQ…GRKDAQVKIR (405 aa)). The 78-residue stretch at 4491–4568 (PPTTDLERQI…LALSVSAAVD (78 aa)) folds into the Carrier 4 domain. Residue serine 4528 is modified to O-(pantetheine 4'-phosphoryl)serine. Residues 4583-5013 (ALSPIQQMFA…QAAAQALPLL (431 aa)) are epimerization 2. The tract at residues 5049 to 5474 (VEDIYPCSPL…ANIISHQDLE (426 aa)) is condensation 4. An adenylation 5 region spans residues 5496-5899 (MQQAESQPGA…GRKDNQVKIH (404 aa)). Residues 6033–6110 (TASSPEELEL…LVSHAQGNTA (78 aa)) enclose the Carrier 5 domain. An O-(pantetheine 4'-phosphoryl)serine modification is found at serine 6070. Residues 6127-6551 (ELSPIQQLFF…CKSSLEAAAA (425 aa)) form an epimerization 3 region. The interval 6593-6935 (VEDIYPCAPI…TGISVQGGAA (343 aa)) is condensation 5. An adenylation 6 region spans residues 7047-7447 (KRPDAPAIDA…GRRDNQVKVR (401 aa)). Positions 7575–7655 (GPQTEVERLL…RSARTVQGHV (81 aa)) constitute a Carrier 6 domain. Serine 7613 is subject to O-(pantetheine 4'-phosphoryl)serine. The epimerization 4 stretch occupies residues 7670–8106 (DLAPVQQMFA…LVTASELLMQ (437 aa)). Positions 8144–8588 (VEDIYPCSPI…EVDLSTDHDQ (445 aa)) are condensation 6. An adenylation 7 region spans residues 8612–9025 (NTVQKQPHST…GRKDSQVKIR (414 aa)). The Carrier 7 domain occupies 9158 to 9236 (SPTAPMERRL…LALLVREGDA (79 aa)). An O-(pantetheine 4'-phosphoryl)serine modification is found at serine 9196. Residues 9282 to 9629 (DVYPTTDLQN…DNLEHDPGTA (348 aa)) form a condensation 7 region.

Belongs to the NRP synthetase family.

It participates in secondary metabolite biosynthesis. Nonribosomal peptide synthetase; part of the gene cluster that mediates the biosynthesis of the unguisins, gamma-aminobutyric acid (GABA)-containing fungal cyclic heptapeptides with the amino acid sequence cyclo-(D-Ala1-D-Val2-L-Phe3-D-Val4-D-Ala5-D-Trp6-GABA7) for unguisin A and cyclo-(D-Ala1-D-Val2-L-Leu3-D-Val4-D-Ala5-D-Trp6-GABA7) for unguisin B. UngA is the main enzyme within the cluster which condenses the 7 residues using its respective 7 modules. The terminal condensation domain (Ct) is involved in cyclization with D-alanine and thereby releasing of unguisins A and B. The alanine racemase ungC provides D-alanine, which is then accepted by the first adenylation domain of ungA. Finally, the hydrolase ungD catalyzes the hydrolysis between the D-tryptophan and GABA residues of unguisins A and B to produce the corresponding linear peptides. This Aspergillus violaceofuscus (strain CBS 115571) protein is Nonribosomal peptide synthetase ungA.